Reading from the N-terminus, the 1849-residue chain is Brefeldin A-inhibited guanine nucleotide-exchange protein 1 (1849 aa).

The tract at residues 2 to 224 (YEGKKTKNMF…QEAKQMEKER (223 aa)) is DCB; DCB:DCB and DCB:HUS domain interaction. Residues 46–58 (AETEKQSPPHGEA) are compositionally biased toward basic and acidic residues. Disordered regions lie at residues 46-65 (AETE…SSTL), 216-301 (EAKQ…ADQA), and 350-413 (INVS…SPGA). Phosphoserine occurs at positions 52, 286, 289, and 290. Composition is skewed to polar residues over residues 350–360 (INVSADGNNGT) and 394–409 (SVSS…SSGP). A phosphoserine mark is found at serine 397 and serine 410. Residues 557–577 (ADAQSVVDIYVNYDCDLNAAN) form an HUS; DCB:HUS domain interaction region. The tract at residues 634–687 (PNSQTTLGQEKPSEQETSEMKHPETINRYGSLNSLESTSSSGIGSYSTQMSGTD) is disordered. The segment covering 644–658 (KPSEQETSEMKHPET) has biased composition (basic and acidic residues). The segment covering 664–684 (SLNSLESTSSSGIGSYSTQMS) has biased composition (low complexity). Residues 709–840 (FTKKPKRGIQ…IIMLTTDLHS (132 aa)) enclose the SEC7 domain. A Nuclear localization signal (NLS) motif is present at residues 711–715 (KKPKR). Serine 1079, serine 1566, and serine 1569 each carry phosphoserine.

In terms of assembly, homodimer. Interacts with ARFGEF2/BIG2; both proteins are probably part of the same or very similar macromolecular complexes. Interacts with FKBP2. Interacts with MYO9B. Interacts with PRKAR1A and PRKAR2A. Interacts with PPP1CC. Interacts with NCL, FBL, NUP62 and U3 small nucleolar RNA. Interacts with DPY30. Interacts with PDE3A. Interacts with KANK1. Interacts with TBC1D22A and TBC1D22B. Post-translationally, phosphorylated. In vitro phosphorylated by PKA reducing its GEF activity and dephosphorylated by phosphatase PP1. Abundantly expressed in kidney, somewhat less abundant in lung, spleen, and brain, and still less abundant in heart.

Its subcellular location is the cytoplasm. It is found in the perinuclear region. The protein localises to the golgi apparatus. It localises to the trans-Golgi network. The protein resides in the nucleus. Its subcellular location is the nucleolus. It is found in the nucleus matrix. The protein localises to the membrane. Its activity is regulated as follows. Inhibited by brefeldin A. Promotes guanine-nucleotide exchange on ARF1 and ARF3. Promotes the activation of ARF1/ARF3 through replacement of GDP with GTP. Involved in vesicular trafficking. Required for the maintenance of Golgi structure; the function may be independent of its GEF activity. Required for the maturation of integrin beta-1 in the Golgi. Involved in the establishment and persistence of cell polarity during directed cell movement in wound healing. Proposed to act as A kinase-anchoring protein (AKAP) and may mediate crosstalk between Arf and PKA pathways. Inhibits GAP activity of MYO9B probably through competitive RhoA binding. The function in the nucleus remains to be determined. In Bos taurus (Bovine), this protein is Brefeldin A-inhibited guanine nucleotide-exchange protein 1 (ARFGEF1).